The primary structure comprises 665 residues: Fructose-1,6-bisphosphatase class 3 (665 aa).

Belongs to the FBPase class 3 family. The cofactor is Mn(2+).

The catalysed reaction is beta-D-fructose 1,6-bisphosphate + H2O = beta-D-fructose 6-phosphate + phosphate. The protein operates within carbohydrate biosynthesis; gluconeogenesis. This chain is Fructose-1,6-bisphosphatase class 3, found in Alkaliphilus metalliredigens (strain QYMF).